Reading from the N-terminus, the 502-residue chain is Serine/threonine-protein kinase SKS1 (502 aa).

Residues 10–338 (FRITAQIGSG…SEVSSLTSFT (329 aa)) enclose the Protein kinase domain. ATP contacts are provided by residues 16-24 (IGSGAYGLV) and Lys-39. Asp-186 serves as the catalytic Proton acceptor. Composition is skewed to low complexity over residues 376–391 (QEQQ…QVQE) and 399–410 (EQIQNQEQAQQQ). The disordered stretch occupies residues 376–439 (QEQQQQQQQQ…GSMEKYEYTN (64 aa)). Residues 411–420 (QEEEDAEPES) show a composition bias toward acidic residues.

This sequence belongs to the protein kinase superfamily. Ser/Thr protein kinase family.

It catalyses the reaction L-seryl-[protein] + ATP = O-phospho-L-seryl-[protein] + ADP + H(+). It carries out the reaction L-threonyl-[protein] + ATP = O-phospho-L-threonyl-[protein] + ADP + H(+). Its function is as follows. May have a role in glucose regulation. In Saccharomyces cerevisiae (strain ATCC 204508 / S288c) (Baker's yeast), this protein is Serine/threonine-protein kinase SKS1 (SKS1).